We begin with the raw amino-acid sequence, 312 residues long: D-alanine--D-alanine ligase (312 aa).

Residues 99–304 form the ATP-grasp domain; the sequence is KKILKAEGIP…FEDLVEKILM (206 aa). ATP is bound at residue 131-186; that stretch reads LQTLKLPVVIKAPREGSTIGIEFVFSKQELPKAIKKVLEIDKQLLVEEFIEGVEVT. Residues Asp-257, Glu-271, and Asn-273 each coordinate Mg(2+).

Belongs to the D-alanine--D-alanine ligase family. Requires Mg(2+) as cofactor. Mn(2+) serves as cofactor.

Its subcellular location is the cytoplasm. It catalyses the reaction 2 D-alanine + ATP = D-alanyl-D-alanine + ADP + phosphate + H(+). It participates in cell wall biogenesis; peptidoglycan biosynthesis. Its function is as follows. Cell wall formation. The protein is D-alanine--D-alanine ligase of Carboxydothermus hydrogenoformans (strain ATCC BAA-161 / DSM 6008 / Z-2901).